We begin with the raw amino-acid sequence, 44 residues long: Photosystem I reaction center subunit IX (44 aa).

The chain crosses the membrane as a helical span at residues 7–27; it reads YLSVAPVLSTLWFGALAGLLI.

Belongs to the PsaJ family.

It localises to the plastid. The protein resides in the chloroplast thylakoid membrane. In terms of biological role, may help in the organization of the PsaE and PsaF subunits. This Solanum bulbocastanum (Wild potato) protein is Photosystem I reaction center subunit IX.